We begin with the raw amino-acid sequence, 676 residues long: Rho guanine nucleotide exchange factor 37 (676 aa).

A disordered region spans residues 1-26 (MADFETDEASSKSESPEQEGQGSEDK). Residues 30 to 213 (HQRLAIRELI…QDVNSNINEY (184 aa)) form the DH domain. The region spanning 254–455 (LKQEAGLVPR…LPHRHVSEPD (202 aa)) is the BAR domain. 2 SH3 domains span residues 506–569 (GPGK…LYHP) and 603–666 (PTMS…RTPS). Disordered regions lie at residues 568-601 (HPINPSEKEPRRQTGMPEDYWLPTPEPTQPSVPT) and 657-676 (PSNFLARTPSPTPRGWNLPS).

May act as a guanine nucleotide exchange factor (GEF). This is Rho guanine nucleotide exchange factor 37 (Arhgef37) from Rattus norvegicus (Rat).